We begin with the raw amino-acid sequence, 273 residues long: Dermonecrotic toxin SdSicTox-betaIIB1bxiv (273 aa).

Residue histidine 4 is part of the active site. Mg(2+)-binding residues include glutamate 24 and aspartate 26. Histidine 40 (nucleophile) is an active-site residue. 2 disulfide bridges follow: cysteine 44–cysteine 50 and cysteine 46–cysteine 189. Residue aspartate 84 participates in Mg(2+) binding.

It belongs to the arthropod phospholipase D family. Class II subfamily. Mg(2+) serves as cofactor. In terms of tissue distribution, expressed by the venom gland.

The protein localises to the secreted. The catalysed reaction is an N-(acyl)-sphingosylphosphocholine = an N-(acyl)-sphingosyl-1,3-cyclic phosphate + choline. It catalyses the reaction an N-(acyl)-sphingosylphosphoethanolamine = an N-(acyl)-sphingosyl-1,3-cyclic phosphate + ethanolamine. The enzyme catalyses a 1-acyl-sn-glycero-3-phosphocholine = a 1-acyl-sn-glycero-2,3-cyclic phosphate + choline. It carries out the reaction a 1-acyl-sn-glycero-3-phosphoethanolamine = a 1-acyl-sn-glycero-2,3-cyclic phosphate + ethanolamine. Dermonecrotic toxins cleave the phosphodiester linkage between the phosphate and headgroup of certain phospholipids (sphingolipid and lysolipid substrates), forming an alcohol (often choline) and a cyclic phosphate. This toxin acts on sphingomyelin (SM). It may also act on ceramide phosphoethanolamine (CPE), lysophosphatidylcholine (LPC) and lysophosphatidylethanolamine (LPE), but not on lysophosphatidylserine (LPS), and lysophosphatidylglycerol (LPG). It acts by transphosphatidylation, releasing exclusively cyclic phosphate products as second products. Induces dermonecrosis, hemolysis, increased vascular permeability, edema, inflammatory response, and platelet aggregation. This Sicarius cf. damarensis (strain GJB-2008) (Six-eyed sand spider) protein is Dermonecrotic toxin SdSicTox-betaIIB1bxiv.